Reading from the N-terminus, the 447-residue chain is tRNA-2-methylthio-N(6)-dimethylallyladenosine synthase (447 aa).

The region spanning 1–116 is the MTTase N-terminal domain; sequence MYIRTFGCQM…LPDLIKRRRA (116 aa). Residues C8, C45, C79, C153, C157, and C160 each contribute to the [4Fe-4S] cluster site. A Radical SAM core domain is found at 139–372; that stretch reads RVDGATAFVS…QALINQQAAA (234 aa). In terms of domain architecture, TRAM spans 375 to 438; that stretch reads QGMIGTRQRV…TNSLRGRVAG (64 aa).

This sequence belongs to the methylthiotransferase family. MiaB subfamily. As to quaternary structure, monomer. It depends on [4Fe-4S] cluster as a cofactor.

It is found in the cytoplasm. The enzyme catalyses N(6)-dimethylallyladenosine(37) in tRNA + (sulfur carrier)-SH + AH2 + 2 S-adenosyl-L-methionine = 2-methylsulfanyl-N(6)-dimethylallyladenosine(37) in tRNA + (sulfur carrier)-H + 5'-deoxyadenosine + L-methionine + A + S-adenosyl-L-homocysteine + 2 H(+). Catalyzes the methylthiolation of N6-(dimethylallyl)adenosine (i(6)A), leading to the formation of 2-methylthio-N6-(dimethylallyl)adenosine (ms(2)i(6)A) at position 37 in tRNAs that read codons beginning with uridine. The sequence is that of tRNA-2-methylthio-N(6)-dimethylallyladenosine synthase from Bordetella pertussis (strain Tohama I / ATCC BAA-589 / NCTC 13251).